An 804-amino-acid polypeptide reads, in one-letter code: Leucine--tRNA ligase (804 aa).

The 'HIGH' region signature appears at 40–51; it reads PYPSGAGLHVGH. The short motif at 576–580 is the 'KMSKS' region element; it reads KMSKS. Residue K579 coordinates ATP.

This sequence belongs to the class-I aminoacyl-tRNA synthetase family.

Its subcellular location is the cytoplasm. The catalysed reaction is tRNA(Leu) + L-leucine + ATP = L-leucyl-tRNA(Leu) + AMP + diphosphate. This Staphylococcus aureus (strain MRSA252) protein is Leucine--tRNA ligase.